The chain runs to 88 residues: Small ribosomal subunit protein bS20 (88 aa).

Residues 1–33 (MANTSSAKKATRKIARRTAVNKSRRTQMRGSVR) form a disordered region.

It belongs to the bacterial ribosomal protein bS20 family.

Functionally, binds directly to 16S ribosomal RNA. This is Small ribosomal subunit protein bS20 from Rhodopseudomonas palustris (strain BisB5).